The chain runs to 192 residues: Elongation factor P (192 aa).

Belongs to the elongation factor P family.

It localises to the cytoplasm. Its pathway is protein biosynthesis; polypeptide chain elongation. Its function is as follows. Involved in peptide bond synthesis. Stimulates efficient translation and peptide-bond synthesis on native or reconstituted 70S ribosomes in vitro. Probably functions indirectly by altering the affinity of the ribosome for aminoacyl-tRNA, thus increasing their reactivity as acceptors for peptidyl transferase. The chain is Elongation factor P from Borreliella afzelii (strain PKo) (Borrelia afzelii).